Here is a 70-residue protein sequence, read N- to C-terminus: Protein SlyX homolog (70 aa).

This sequence belongs to the SlyX family.

The protein is Protein SlyX homolog of Shewanella loihica (strain ATCC BAA-1088 / PV-4).